Here is a 152-residue protein sequence, read N- to C-terminus: RxLR effector protein Avrblb1 (152 aa).

Residues 1-24 form the signal peptide; the sequence is MRSLLLTVLLNLVVLLATTGAVSS. A RxLR-dEER motif is present at residues 51-72; the sequence is RSLRGDYNNEVTKEPNTSDEER. Positions 54 to 56 match the RGD RLK-binding motif motif; the sequence is RGD. An N-linked (GlcNAc...) asparagine glycan is attached at asparagine 66. Positions 99-152 are w motif; that stretch reads QSKTVLRYEDKLFTALYKSGETPRSLRTKHLDKASASVFFNRFKKWYDKNVGPS.

The protein belongs to the RxLR effector family. In terms of assembly, interacts with host defense protein RGA2/Rpi-blb1. Interacts with host legume-type lectin receptor kinase LECRK19.

The protein localises to the secreted. Its subcellular location is the host nucleus. The protein resides in the host nucleolus. It is found in the host cell membrane. Secreted effector that acts as an elicitor of hypersensitive response (HR) specifically on plants carrying defense protein RGA2/Rpi-blb1. Enhances P.infestans colonization of plant hosts Nicotiana benthamiana and potato Solanum bulbocastanum leaves. Associates with host legume-type lectin receptor kinases and disrupts attachments between the host plasma membrane and cell wall. This is RxLR effector protein Avrblb1 from Phytophthora infestans (strain T30-4) (Potato late blight agent).